A 302-amino-acid chain; its full sequence is 4-hydroxy-tetrahydrodipicolinate synthase (302 aa).

Pyruvate is bound at residue Thr46. Tyr134 functions as the Proton donor/acceptor in the catalytic mechanism. The active-site Schiff-base intermediate with substrate is the Lys162. Residue Val204 coordinates pyruvate.

The protein belongs to the DapA family. Homotetramer; dimer of dimers.

Its subcellular location is the cytoplasm. It catalyses the reaction L-aspartate 4-semialdehyde + pyruvate = (2S,4S)-4-hydroxy-2,3,4,5-tetrahydrodipicolinate + H2O + H(+). It participates in amino-acid biosynthesis; L-lysine biosynthesis via DAP pathway; (S)-tetrahydrodipicolinate from L-aspartate: step 3/4. Functionally, catalyzes the condensation of (S)-aspartate-beta-semialdehyde [(S)-ASA] and pyruvate to 4-hydroxy-tetrahydrodipicolinate (HTPA). The chain is 4-hydroxy-tetrahydrodipicolinate synthase from Xanthomonas campestris pv. campestris (strain ATCC 33913 / DSM 3586 / NCPPB 528 / LMG 568 / P 25).